Consider the following 334-residue polypeptide: Cathepsin R (334 aa).

A signal peptide spans 1-17; it reads MAAVVFIAFLYLGVASG. Residues 18 to 114 constitute a propeptide, activation peptide; the sequence is VPVLDSSLDA…SIMKREAGSI (97 aa). Disulfide bonds link Cys-136-Cys-179 and Cys-170-Cys-212. Cys-139 is an active-site residue. Asn-269 carries N-linked (GlcNAc...) asparagine glycosylation. Cys-270 and Cys-323 are disulfide-bonded. Residues His-277 and Asn-301 contribute to the active site.

This sequence belongs to the peptidase C1 family. In terms of tissue distribution, placenta.

It localises to the lysosome. In Mus musculus (Mouse), this protein is Cathepsin R (Ctsr).